The chain runs to 246 residues: 5-oxoprolinase subunit A (246 aa).

The protein belongs to the LamB/PxpA family. Forms a complex composed of PxpA, PxpB and PxpC.

It catalyses the reaction 5-oxo-L-proline + ATP + 2 H2O = L-glutamate + ADP + phosphate + H(+). Catalyzes the cleavage of 5-oxoproline to form L-glutamate coupled to the hydrolysis of ATP to ADP and inorganic phosphate. The chain is 5-oxoprolinase subunit A from Vibrio cholerae serotype O1 (strain M66-2).